The sequence spans 45 residues: MDKEIHQFGKGHVLHQMLRILELEVIQIMPKVMTNKKKPTLHIGV.

Not detected in seedlings, leaves, embryos or root and shoot meristems.

The protein is Putative purine permease 9 of Arabidopsis thaliana (Mouse-ear cress).